Reading from the N-terminus, the 721-residue chain is Protein mu-NS (721 aa).

The segment at 1-13 is interaction with sigma-NS; sequence MASFKGFSANTVP. Positions 1-38 are RNA-binding; it reads MASFKGFSANTVPVSKTRKDTSSLTATPGLRAPSMSSP. Residues 14-40 are interaction with mu-2; that stretch reads VSKTRKDTSSLTATPGLRAPSMSSPVD. A disordered region spans residues 17–37; sequence TRKDTSSLTATPGLRAPSMSS. An involved in the formation of factory-like inclusions region spans residues 471 to 721; the sequence is QSDTVDGIKL…IDFSVPADEL (251 aa). 2 coiled-coil regions span residues 523–556 and 632–686; these read LLSQLRELSSEVTRLQMDLSRTQAINTRLEADVK and KQAH…NQRQ.

Belongs to the orthoreovirus mu-NS protein family. In terms of assembly, interacts with mu-2. Interacts with sigma-NS; in viral factories. Interacts with the inner capsid proteins lambda-1 and sigma-2, and outer capsid protein lambda-2; in viral factories. In terms of processing, the N-terminus is blocked.

Its subcellular location is the host cytoplasm. Functionally, non-structural protein implicated with protein sigma-NS in forming the matrix of viral factories, which are large inclusions in the host cytoplasm where replication intermediates are assembled and viral RNA replication takes place. Together with mu-2, recruits the other core proteins to these factories. This chain is Protein mu-NS (M3), found in Mammalia (T2J).